The sequence spans 266 residues: Probable septum site-determining protein MinC (266 aa).

The interval 98–146 (ILKGGRPVSDVDVPKVEPESPPAEEKKKTGKATKASGKSDEIGETDSPQ) is disordered. Basic and acidic residues predominate over residues 109–124 (DVPKVEPESPPAEEKK).

Belongs to the MinC family. As to quaternary structure, interacts with MinD and FtsZ.

Functionally, cell division inhibitor that blocks the formation of polar Z ring septums. Rapidly oscillates between the poles of the cell to destabilize FtsZ filaments that have formed before they mature into polar Z rings. Prevents FtsZ polymerization. The protein is Probable septum site-determining protein MinC of Allorhizobium ampelinum (strain ATCC BAA-846 / DSM 112012 / S4) (Agrobacterium vitis (strain S4)).